Reading from the N-terminus, the 152-residue chain is Large ribosomal subunit protein uL15 (152 aa).

The segment covering 1 to 12 (MTSTLNTLKSNT) has biased composition (polar residues). A disordered region spans residues 1 to 57 (MTSTLNTLKSNTGSRKKKLRKGRGIAAGQGASCGFGMRGQKSRSGRPTRPGFEGGQM). The span at 14–23 (SRKKKLRKGR) shows a compositional bias: basic residues. Gly residues predominate over residues 25–37 (IAAGQGASCGFGM).

It belongs to the universal ribosomal protein uL15 family. In terms of assembly, part of the 50S ribosomal subunit.

Its function is as follows. Binds to the 23S rRNA. The chain is Large ribosomal subunit protein uL15 from Prochlorococcus marinus subsp. pastoris (strain CCMP1986 / NIES-2087 / MED4).